We begin with the raw amino-acid sequence, 802 residues long: DNA mismatch repair protein MutS (802 aa).

An ATP-binding site is contributed by glycine 617–serine 624.

This sequence belongs to the DNA mismatch repair MutS family.

In terms of biological role, this protein is involved in the repair of mismatches in DNA. It is possible that it carries out the mismatch recognition step. This protein has a weak ATPase activity. The chain is DNA mismatch repair protein MutS from Buchnera aphidicola subsp. Acyrthosiphon pisum (strain Tuc7).